Reading from the N-terminus, the 224-residue chain is Redox-sensing transcriptional repressor Rex (224 aa).

Residues 17–56 constitute a DNA-binding region (H-T-H motif); it reads RYHRCLEELLKNDIKRISSKELSERMGVTASQIRQDLNNF. 91–96 serves as a coordination point for NAD(+); sequence GAGNLG.

It belongs to the transcriptional regulatory Rex family. As to quaternary structure, homodimer.

The protein localises to the cytoplasm. Functionally, modulates transcription in response to changes in cellular NADH/NAD(+) redox state. This Caldanaerobacter subterraneus subsp. tengcongensis (strain DSM 15242 / JCM 11007 / NBRC 100824 / MB4) (Thermoanaerobacter tengcongensis) protein is Redox-sensing transcriptional repressor Rex.